A 213-amino-acid polypeptide reads, in one-letter code: mRNA-decapping protein OPG121 (213 aa).

The N(7)-methyl-GTP site is built by glutamate 16 and arginine 50. A Nudix hydrolase domain is found at 30–209; that stretch reads KDTHVFAACI…EYLSYIYNML (180 aa). Positions 111 to 132 match the Nudix box motif; the sequence is GKLDKKESIKDCLRRELKEESD. The active-site Nucleophile is glutamate 126. 2 residues coordinate Mg(2+): glutamate 126 and glutamate 130. Aspartate 151 serves as a coordination point for N(7)-methyl-GTP. Glutamate 183 is a Mg(2+) binding site.

It belongs to the Nudix hydrolase family. It depends on Mg(2+) as a cofactor. Mn(2+) serves as cofactor.

The catalysed reaction is a 5'-end (N(7)-methyl 5'-triphosphoguanosine)-guanosine in mRNA + H2O = a 5'-end phospho-guanosine in mRNA + N(7)-methyl-GDP + 2 H(+). Decapping enzyme that remove the protective 5'-cap from both host and viral mRNAs to commit transcripts for decay by the cellular exonuclease XRN1. Accelerates viral and cellular mRNA turnover to eliminate competing host mRNAs and allow stage-specific synthesis of viral proteins. Acceleration of the turnover of cellular transcripts may even promote the shutoff of host protein synthesis. The protein is mRNA-decapping protein OPG121 (OPG121) of Vaccinia virus (strain Western Reserve) (VACV).